The sequence spans 487 residues: Probable cytosol aminopeptidase (487 aa).

2 residues coordinate Mn(2+): Lys253 and Asp258. Lys265 is an active-site residue. Residues Asp277, Asp337, and Glu339 each coordinate Mn(2+). The active site involves Arg341.

Belongs to the peptidase M17 family. Requires Mn(2+) as cofactor.

It localises to the cytoplasm. The catalysed reaction is Release of an N-terminal amino acid, Xaa-|-Yaa-, in which Xaa is preferably Leu, but may be other amino acids including Pro although not Arg or Lys, and Yaa may be Pro. Amino acid amides and methyl esters are also readily hydrolyzed, but rates on arylamides are exceedingly low.. It catalyses the reaction Release of an N-terminal amino acid, preferentially leucine, but not glutamic or aspartic acids.. Presumably involved in the processing and regular turnover of intracellular proteins. Catalyzes the removal of unsubstituted N-terminal amino acids from various peptides. This Parasynechococcus marenigrum (strain WH8102) protein is Probable cytosol aminopeptidase.